The following is a 185-amino-acid chain: TRAF-interacting protein with FHA domain-containing protein A (185 aa).

Thr9 is modified (phosphothreonine). Positions 48–104 (VKFGRNSNMCQYTFQDKQVSRVQFALQPFKQFNSSVLSFEIKNMSKKTSLMVDNQEL) constitute an FHA domain.

Belongs to the TIFA family. Homooligomer; homooligomerizes following phosphorylation at Thr-9. Interacts with IRAK1, TRAF2 and TRAF6. Interacts with TIFAB; binding to TIFAB inhibits TRAF6 activation, possibly by inducing a conformational change in TIFA. Interacts with ZCCHC11; binding to ZCCHC11 suppresses the TRAF6-dependent activation of NF-kappa-B. Phosphorylated at Thr-9 following detection of ADP-D-glycero-beta-D-manno-heptose (ADP-Heptose) by ALPK1. Phosphorylation at Thr-9 by ALPK1 leads to the formation of an intermolecular binding between the FHA domain and phosphorylated Thr-9, promoting TIFA oligomerization and TIFA-mediated NF-kappa-B activation.

The protein localises to the cytoplasm. Functionally, adapter molecule that plays a key role in the activation of pro-inflammatory NF-kappa-B signaling following detection of bacterial pathogen-associated molecular pattern metabolites (PAMPs). Promotes activation of an innate immune response by inducing the oligomerization and polyubiquitination of TRAF6, which leads to the activation of TAK1 and IKK through a proteasome-independent mechanism. TIFA-dependent innate immune response is triggered by ADP-D-glycero-beta-D-manno-heptose (ADP-Heptose), a potent PAMP present in all Gram-negative and some Gram-positive bacteria: ADP-Heptose is recognized by ALPK1, which phosphorylates TIFA at Thr-9, leading to TIFA homooligomerization and subsequent activation of pro-inflammatory NF-kappa-B signaling. This Rattus norvegicus (Rat) protein is TRAF-interacting protein with FHA domain-containing protein A.